The sequence spans 116 residues: Ino eighty subunit 4 (116 aa).

The span at 1 to 15 shows a compositional bias: low complexity; it reads MSQESSVLSESQEQL. Disordered regions lie at residues 1 to 40 and 70 to 116; these read MSQE…PVLP and EERQ…GLDS. Residues 84 to 108 show a composition bias toward basic and acidic residues; sequence KGSDDKATRKKEPADEDPEVKQLEK.

In terms of assembly, component of the chromatin-remodeling INO80 complex, at least composed of ARP4, ARP5, ARP8, RVB1, RVB2, TAF14, NHP10, IES1, IES3, IES4, IES6, ACT1, IES2, IES5 and INO80.

The protein resides in the nucleus. In Saccharomyces cerevisiae (strain ATCC 204508 / S288c) (Baker's yeast), this protein is Ino eighty subunit 4 (IES4).